The primary structure comprises 169 residues: Chorismate pyruvate-lyase (169 aa).

Residues M35, R77, L115, and E156 each contribute to the substrate site.

The protein belongs to the UbiC family. As to quaternary structure, monomer.

The protein resides in the cytoplasm. The catalysed reaction is chorismate = 4-hydroxybenzoate + pyruvate. The protein operates within cofactor biosynthesis; ubiquinone biosynthesis. In terms of biological role, removes the pyruvyl group from chorismate, with concomitant aromatization of the ring, to provide 4-hydroxybenzoate (4HB) for the ubiquinone pathway. The polypeptide is Chorismate pyruvate-lyase (Cronobacter sakazakii (strain ATCC BAA-894) (Enterobacter sakazakii)).